The following is a 109-amino-acid chain: FK506-binding protein (109 aa).

In terms of domain architecture, PPIase FKBP-type spans 20–108; it reads GKEITVHYTG…IFEVELLKVY (89 aa).

The protein belongs to the FKBP-type PPIase family.

The catalysed reaction is [protein]-peptidylproline (omega=180) = [protein]-peptidylproline (omega=0). Its function is as follows. PPIases accelerate the folding of proteins. This is FK506-binding protein (fbp) from Neisseria meningitidis serogroup C.